Here is a 179-residue protein sequence, read N- to C-terminus: Large ribosomal subunit protein uL5 (179 aa).

Belongs to the universal ribosomal protein uL5 family. As to quaternary structure, part of the 50S ribosomal subunit; part of the 5S rRNA/L5/L18/L25 subcomplex. Contacts the 5S rRNA and the P site tRNA. Forms a bridge to the 30S subunit in the 70S ribosome.

Functionally, this is one of the proteins that bind and probably mediate the attachment of the 5S RNA into the large ribosomal subunit, where it forms part of the central protuberance. In the 70S ribosome it contacts protein S13 of the 30S subunit (bridge B1b), connecting the 2 subunits; this bridge is implicated in subunit movement. Contacts the P site tRNA; the 5S rRNA and some of its associated proteins might help stabilize positioning of ribosome-bound tRNAs. This chain is Large ribosomal subunit protein uL5, found in Shewanella loihica (strain ATCC BAA-1088 / PV-4).